Reading from the N-terminus, the 243-residue chain is Hydroxyacylglutathione hydrolase (243 aa).

Zn(2+) contacts are provided by histidine 52, histidine 54, aspartate 56, histidine 57, histidine 108, aspartate 125, and histidine 163.

The protein belongs to the metallo-beta-lactamase superfamily. Glyoxalase II family. In terms of assembly, monomer. Zn(2+) is required as a cofactor.

The catalysed reaction is an S-(2-hydroxyacyl)glutathione + H2O = a 2-hydroxy carboxylate + glutathione + H(+). It participates in secondary metabolite metabolism; methylglyoxal degradation; (R)-lactate from methylglyoxal: step 2/2. Functionally, thiolesterase that catalyzes the hydrolysis of S-D-lactoyl-glutathione to form glutathione and D-lactic acid. This chain is Hydroxyacylglutathione hydrolase, found in Haemophilus influenzae (strain PittGG).